The chain runs to 224 residues: Thymidylate kinase (224 aa).

ATP is bound at residue 13-20 (GGEGAGKS).

Belongs to the thymidylate kinase family.

The catalysed reaction is dTMP + ATP = dTDP + ADP. Phosphorylation of dTMP to form dTDP in both de novo and salvage pathways of dTTP synthesis. The sequence is that of Thymidylate kinase from Agrobacterium fabrum (strain C58 / ATCC 33970) (Agrobacterium tumefaciens (strain C58)).